The primary structure comprises 411 residues: Dual-specificity RNA methyltransferase RlmN (411 aa).

E125 functions as the Proton acceptor in the catalytic mechanism. The Radical SAM core domain maps to 131–380 (EEGRGTLCIS…IRTPRGRDIL (250 aa)). C138 and C383 are joined by a disulfide. 3 residues coordinate [4Fe-4S] cluster: C145, C149, and C152. S-adenosyl-L-methionine-binding positions include 209 to 210 (GE), S241, 263 to 265 (SLH), and N340. C383 serves as the catalytic S-methylcysteine intermediate.

Belongs to the radical SAM superfamily. RlmN family. [4Fe-4S] cluster is required as a cofactor.

The protein localises to the cytoplasm. The catalysed reaction is adenosine(2503) in 23S rRNA + 2 reduced [2Fe-2S]-[ferredoxin] + 2 S-adenosyl-L-methionine = 2-methyladenosine(2503) in 23S rRNA + 5'-deoxyadenosine + L-methionine + 2 oxidized [2Fe-2S]-[ferredoxin] + S-adenosyl-L-homocysteine. It catalyses the reaction adenosine(37) in tRNA + 2 reduced [2Fe-2S]-[ferredoxin] + 2 S-adenosyl-L-methionine = 2-methyladenosine(37) in tRNA + 5'-deoxyadenosine + L-methionine + 2 oxidized [2Fe-2S]-[ferredoxin] + S-adenosyl-L-homocysteine. In terms of biological role, specifically methylates position 2 of adenine 2503 in 23S rRNA and position 2 of adenine 37 in tRNAs. m2A2503 modification seems to play a crucial role in the proofreading step occurring at the peptidyl transferase center and thus would serve to optimize ribosomal fidelity. The protein is Dual-specificity RNA methyltransferase RlmN of Brucella canis (strain ATCC 23365 / NCTC 10854 / RM-666).